The primary structure comprises 456 residues: Gamma-glutamyl phosphate reductase (456 aa).

Ser-2 carries the N-acetylserine modification.

Belongs to the gamma-glutamyl phosphate reductase family.

The catalysed reaction is L-glutamate 5-semialdehyde + phosphate + NADP(+) = L-glutamyl 5-phosphate + NADPH + H(+). It functions in the pathway amino-acid biosynthesis; L-proline biosynthesis; L-glutamate 5-semialdehyde from L-glutamate: step 2/2. Functionally, catalyzes the NADPH dependent reduction of L-gamma-glutamyl 5-phosphate into L-glutamate 5-semialdehyde and phosphate. The product spontaneously undergoes cyclization to form 1-pyrroline-5-carboxylate. The chain is Gamma-glutamyl phosphate reductase (PRO2) from Saccharomyces cerevisiae (strain ATCC 204508 / S288c) (Baker's yeast).